We begin with the raw amino-acid sequence, 429 residues long: Serine--tRNA ligase (429 aa).

236 to 238 contributes to the L-serine binding site; that stretch reads TAE. An ATP-binding site is contributed by 267–269; it reads RSE. Residue Glu290 participates in L-serine binding. ATP is bound at residue 354-357; the sequence is EISS. Ser390 lines the L-serine pocket.

This sequence belongs to the class-II aminoacyl-tRNA synthetase family. Type-1 seryl-tRNA synthetase subfamily. Homodimer. The tRNA molecule binds across the dimer.

It localises to the cytoplasm. It carries out the reaction tRNA(Ser) + L-serine + ATP = L-seryl-tRNA(Ser) + AMP + diphosphate + H(+). It catalyses the reaction tRNA(Sec) + L-serine + ATP = L-seryl-tRNA(Sec) + AMP + diphosphate + H(+). Its pathway is aminoacyl-tRNA biosynthesis; selenocysteinyl-tRNA(Sec) biosynthesis; L-seryl-tRNA(Sec) from L-serine and tRNA(Sec): step 1/1. In terms of biological role, catalyzes the attachment of serine to tRNA(Ser). Is also able to aminoacylate tRNA(Sec) with serine, to form the misacylated tRNA L-seryl-tRNA(Sec), which will be further converted into selenocysteinyl-tRNA(Sec). This is Serine--tRNA ligase from Photorhabdus laumondii subsp. laumondii (strain DSM 15139 / CIP 105565 / TT01) (Photorhabdus luminescens subsp. laumondii).